The primary structure comprises 154 residues: Putative glutamine amidotransferase-like protein RP712 (154 aa).

The region spanning 1–94 (MSIEKEKFWA…QQSVWSFHNK (94 aa)) is the Glutamine amidotransferase type-1 domain.

The chain is Putative glutamine amidotransferase-like protein RP712 from Rickettsia prowazekii (strain Madrid E).